Consider the following 500-residue polypeptide: Catalase (500 aa).

Catalysis depends on residues His-59 and Asn-131. Residue Tyr-339 participates in heme binding.

Belongs to the catalase family. The cofactor is heme.

The catalysed reaction is 2 H2O2 = O2 + 2 H2O. Decomposes hydrogen peroxide into water and oxygen; serves to protect cells from the toxic effects of hydrogen peroxide. This is Catalase (katA) from Neisseria gonorrhoeae.